A 405-amino-acid polypeptide reads, in one-letter code: MALVVQKYGGTSVGDLERIHKVAQRIAHYREKGHRLAVVVSAMGHTTDELIALAKRVNPRPPFRELDLLTTTGEQVSVALLSMQLWAMGIPAKGFVQHQIGITTDGRYGDARILEVNPARIREALDQGFVAVIAGFMGTTPEGEITTLGRGGSDTTAVAIAAALGAKECEIYTDTEGVYTTDPHLIPEARKLSVIGYDQMLEMAALGARVLHPRAVYYAKRYGVVLHVRSSFSYNPGTLVKEVAMEMDKAVTGVALDLDHAQIGLIGIPDQPGIAAKVFQALAERGIAVDMIIQGVPGHDPSRQQMAFTVKKDFAQEALEALEPVLAEIGGEAILRPDIAKVSIVGVGLASTPEVPAKMFQAVASTGANIEMIATSEVRISVIIPAEYAEAALRAVHQAFELDKA.

ATP is bound at residue 7–10 (KYGG). A substrate-binding site is contributed by 25–30 (RIAHYR). Position 41 (Ser-41) interacts with ATP. Substrate is bound by residues 47–49 (TDE), Glu-74, 125–126 (LD), 150–153 (RGGS), and Ser-153. ATP-binding positions include 173–174 (TD), 179–184 (YTTDPH), and Arg-209. ACT domains follow at residues 263–342 (IGLI…IAKV) and 344–405 (IVGV…LDKA). Substrate contacts are provided by residues Asp-270, 274 to 275 (IA), 288 to 290 (AVD), Gln-294, 355 to 356 (VP), 369 to 370 (NI), and 376 to 377 (SE).

Belongs to the aspartokinase family. Heterotetramer consisting of 2 isoforms Alpha (catalytic and regulation) and of a homodimer of 2 isoforms Beta (regulation and thermostability).

The catalysed reaction is L-aspartate + ATP = 4-phospho-L-aspartate + ADP. It participates in amino-acid biosynthesis; L-lysine biosynthesis via DAP pathway; (S)-tetrahydrodipicolinate from L-aspartate: step 1/4. It functions in the pathway amino-acid biosynthesis; L-methionine biosynthesis via de novo pathway; L-homoserine from L-aspartate: step 1/3. Its pathway is amino-acid biosynthesis; L-threonine biosynthesis; L-threonine from L-aspartate: step 1/5. Its activity is regulated as follows. Inhibited by threonine. In terms of biological role, catalyzes the phosphorylation of the beta-carboxyl group of aspartic acid with ATP to yield 4-phospho-L-aspartate, which is involved in the branched biosynthetic pathway leading to the biosynthesis of amino acids threonine, isoleucine and methionine. In Thermus thermophilus, this protein is Aspartokinase (ask).